Here is a 424-residue protein sequence, read N- to C-terminus: Serine hydroxymethyltransferase (424 aa).

(6S)-5,6,7,8-tetrahydrofolate contacts are provided by residues L123 and 127–129 (GHL). Residue K232 is modified to N6-(pyridoxal phosphate)lysine. E245 is a (6S)-5,6,7,8-tetrahydrofolate binding site.

The protein belongs to the SHMT family. Homodimer. Pyridoxal 5'-phosphate is required as a cofactor.

It localises to the cytoplasm. The enzyme catalyses (6R)-5,10-methylene-5,6,7,8-tetrahydrofolate + glycine + H2O = (6S)-5,6,7,8-tetrahydrofolate + L-serine. It participates in one-carbon metabolism; tetrahydrofolate interconversion. The protein operates within amino-acid biosynthesis; glycine biosynthesis; glycine from L-serine: step 1/1. In terms of biological role, catalyzes the reversible interconversion of serine and glycine with tetrahydrofolate (THF) serving as the one-carbon carrier. This reaction serves as the major source of one-carbon groups required for the biosynthesis of purines, thymidylate, methionine, and other important biomolecules. Also exhibits THF-independent aldolase activity toward beta-hydroxyamino acids, producing glycine and aldehydes, via a retro-aldol mechanism. The sequence is that of Serine hydroxymethyltransferase from Kocuria rhizophila (strain ATCC 9341 / DSM 348 / NBRC 103217 / DC2201).